A 321-amino-acid polypeptide reads, in one-letter code: Glycerol-3-phosphate dehydrogenase [NAD(P)+] (321 aa).

Serine 10, tryptophan 11, arginine 31, arginine 32, tyrosine 47, and lysine 98 together coordinate NADPH. Sn-glycerol 3-phosphate contacts are provided by lysine 98, glycine 125, and serine 127. Residue alanine 129 coordinates NADPH. Sn-glycerol 3-phosphate-binding residues include lysine 177, aspartate 230, serine 240, arginine 241, and asparagine 242. The active-site Proton acceptor is lysine 177. Arginine 241 lines the NADPH pocket. The NADPH site is built by valine 265 and glutamate 267.

It belongs to the NAD-dependent glycerol-3-phosphate dehydrogenase family.

The protein resides in the cytoplasm. It carries out the reaction sn-glycerol 3-phosphate + NAD(+) = dihydroxyacetone phosphate + NADH + H(+). The catalysed reaction is sn-glycerol 3-phosphate + NADP(+) = dihydroxyacetone phosphate + NADPH + H(+). It participates in membrane lipid metabolism; glycerophospholipid metabolism. Catalyzes the reduction of the glycolytic intermediate dihydroxyacetone phosphate (DHAP) to sn-glycerol 3-phosphate (G3P), the key precursor for phospholipid synthesis. The protein is Glycerol-3-phosphate dehydrogenase [NAD(P)+] of Thermotoga sp. (strain RQ2).